Reading from the N-terminus, the 783-residue chain is Endonuclease MutS2 (783 aa).

333–340 (GPNTGGKT) contributes to the ATP binding site. The Smr domain maps to 708-783 (IDLRGKNIEE…GLGATFIYLK (76 aa)).

Belongs to the DNA mismatch repair MutS family. MutS2 subfamily. As to quaternary structure, homodimer. Binds to stalled ribosomes, contacting rRNA.

Its function is as follows. Endonuclease that is involved in the suppression of homologous recombination and thus may have a key role in the control of bacterial genetic diversity. Acts as a ribosome collision sensor, splitting the ribosome into its 2 subunits. Detects stalled/collided 70S ribosomes which it binds and splits by an ATP-hydrolysis driven conformational change. Acts upstream of the ribosome quality control system (RQC), a ribosome-associated complex that mediates the extraction of incompletely synthesized nascent chains from stalled ribosomes and their subsequent degradation. Probably generates substrates for RQC. The sequence is that of Endonuclease MutS2 from Finegoldia magna (strain ATCC 29328 / DSM 20472 / WAL 2508) (Peptostreptococcus magnus).